Consider the following 449-residue polypeptide: CCAAT/enhancer-binding protein (449 aa).

3 disordered regions span residues 211–233 (HATY…TIKE), 276–302 (GNPL…NGSQ), and 334–386 (SKLH…KAKV). Low complexity-rich tracts occupy residues 215–229 (NNSS…SDSS), 280–301 (NGGN…SNGS), and 339–349 (QQQHQQHQQQQ). The segment covering 357 to 368 (KHVDKGTDEYRR) has biased composition (basic and acidic residues). One can recognise a bZIP domain in the interval 363–426 (TDEYRRRRER…QLHKQIYMQL (64 aa)). The segment at 367–396 (RRRRERNNIAVRKSREKAKVRSREVEERVK) is basic motif. Residues 398 to 405 (LLKEKDAL) are leucine-zipper.

The protein belongs to the bZIP family. C/EBP subfamily. As to quaternary structure, binds DNA as a dimer and can form stable heterodimers. Interacts with trbl. Ubiquitination/deubiquitination regulates border cell migration. Ubiquitination is stimulated by trbl, which leads to proteasomal degradation and inhibits border cell migration. Deubiquitination by Usp47, leads to its stabilization and promotes border cell migration.

The protein localises to the nucleus. Required for the expression of gene products mediating border cell migration. Among the DNA sequences that this protein binds with high affinity is a conserved site within the promoter of its gene. The protein is CCAAT/enhancer-binding protein (slbo) of Drosophila melanogaster (Fruit fly).